We begin with the raw amino-acid sequence, 100 residues long: Small ribosomal subunit protein uS14 (100 aa).

Belongs to the universal ribosomal protein uS14 family. As to quaternary structure, part of the 30S ribosomal subunit. Contacts proteins S3 and S10.

Its function is as follows. Binds 16S rRNA, required for the assembly of 30S particles and may also be responsible for determining the conformation of the 16S rRNA at the A site. This Microcystis aeruginosa (strain NIES-843 / IAM M-2473) protein is Small ribosomal subunit protein uS14.